Reading from the N-terminus, the 90-residue chain is MPKAKVTKNSIAPVSSNPSANRTPVKINSTGTPMWYKVIMFAFMLVGLLWLVANYLVGPQIPFMNELDAWNYGIGFGLLIIGLLMTMGWR.

Positions 1-26 are disordered; it reads MPKAKVTKNSIAPVSSNPSANRTPVK. The segment covering 7–26 has biased composition (polar residues); it reads TKNSIAPVSSNPSANRTPVK. A run of 2 helical transmembrane segments spans residues 38–58 and 69–89; these read VIMF…YLVG and AWNY…TMGW.

Belongs to the CrgA family.

The protein localises to the cell membrane. In terms of biological role, involved in cell division. In Corynebacterium efficiens (strain DSM 44549 / YS-314 / AJ 12310 / JCM 11189 / NBRC 100395), this protein is Cell division protein CrgA.